The following is a 452-amino-acid chain: Ribosome biogenesis protein YTM1 (452 aa).

The interval 17–98 is ubiquitin-like (UBL) domain; sequence IVSQPVVFTT…EETLEIEYIE (82 aa). WD repeat units follow at residues 110–148, 150–195, and 208–247; these read PHED…TASI, AHPA…NPMA, and LHTA…TDEV. Residues 245 to 269 form a disordered region; the sequence is DEVPEPALNERDRSKKRRRVEEGEV. Residues 252–269 are compositionally biased toward basic and acidic residues; it reads LNERDRSKKRRRVEEGEV. 4 WD repeats span residues 282–322, 325–364, 371–411, and 418–452; these read SHTA…CSHT, ASEK…TILT, MHPS…SAMA, and GSGQ…EQKV.

It belongs to the WD repeat WDR12/YTM1 family. Component of the NOP7 complex, composed of ERB1, NOP7 and YTM1. The complex is held together by ERB1, which interacts with NOP7 via its N-terminal domain and with YTM1 via a high-affinity interaction between the seven-bladed beta-propeller domains of the 2 proteins. The NOP7 complex associates with the 66S pre-ribosome. Interacts (via UBL domain) with MDN1 (via VWFA/MIDAS domain).

It localises to the nucleus. It is found in the nucleolus. Its subcellular location is the nucleoplasm. In terms of biological role, component of the NOP7 complex, which is required for maturation of the 25S and 5.8S ribosomal RNAs and formation of the 60S ribosome. This chain is Ribosome biogenesis protein YTM1, found in Laccaria bicolor (strain S238N-H82 / ATCC MYA-4686) (Bicoloured deceiver).